The sequence spans 574 residues: Ankyrin repeat protein B18 (574 aa).

6 ANK repeats span residues 56–87, 135–164, 167–213, 217–249, 253–285, and 327–356; these read TGYT…DVTM, IKSR…DPNF, DGYT…NLNA, CGNT…NFKI, HGLT…NVGE, and EGKT…DINA. Residues 541–574 form the F-box domain; it reads NCLLTLLPSEIIYEILYMLTINDLYNISYPPTKV.

The protein is Ankyrin repeat protein B18 of Vaccinia virus (strain Ankara) (VACV).